The following is a 435-amino-acid chain: Fez family zinc finger protein 2 (435 aa).

An Engrailed homology 1 repressor motif is present at residues 27–42 (SLAFSIERIMAKTSEP). 6 consecutive C2H2-type zinc fingers follow at residues 254 to 276 (FTCE…MPVH), 282 to 304 (FVCK…KIIH), 310 to 332 (HKCN…IRIH), 338 to 360 (FVCE…KLTH), 366 to 388 (YKCT…MHTH), and 394 to 417 (FTCG…RKLH).

Belongs to the krueppel C2H2-type zinc-finger protein family.

Its subcellular location is the nucleus. Functionally, transcription repressor. Component of the regulatory cascade that controls the development of dopaminergic (DA) and serotonergic (5HT) neurons. The protein is Fez family zinc finger protein 2 (fezf2) of Xenopus tropicalis (Western clawed frog).